The following is a 98-amino-acid chain: NADH-ubiquinone oxidoreductase chain 4L (98 aa).

3 helical membrane-spanning segments follow: residues 1–21, 29–49, and 61–81; these read MSMVYANIFMAFVVSLMGMLV, SLLCLEGMMLSLFVMMSVTIL, and IILLVFAACEAALGLSLLVMV.

It belongs to the complex I subunit 4L family. As to quaternary structure, core subunit of respiratory chain NADH dehydrogenase (Complex I) which is composed of 45 different subunits.

Its subcellular location is the mitochondrion inner membrane. The enzyme catalyses a ubiquinone + NADH + 5 H(+)(in) = a ubiquinol + NAD(+) + 4 H(+)(out). Functionally, core subunit of the mitochondrial membrane respiratory chain NADH dehydrogenase (Complex I) which catalyzes electron transfer from NADH through the respiratory chain, using ubiquinone as an electron acceptor. Part of the enzyme membrane arm which is embedded in the lipid bilayer and involved in proton translocation. This Odobenus rosmarus rosmarus (Atlantic walrus) protein is NADH-ubiquinone oxidoreductase chain 4L (MT-ND4L).